The sequence spans 531 residues: MGCFSSKHRKTQNDGGEKSIPINPVQTHVVPEHRKPQTPTPKPMTQPIHQQISTPSSNPVSVRDPDTILGKPFEDIRKFYSLGKELGRGQFGITYMCKEIGTGNTYACKSILKRKLISKQDKEDVKREIQIMQYLSGQPNIVEIKGAYEDRQSIHLVMELCAGGELFDRIIAQGHYSERAAAGIIRSIVNVVQICHFMGVVHRDLKPENFLLSSKEENAMLKATDFGLSVFIEEGKVYRDIVGSAYYVAPEVLRRSYGKEIDIWSAGVILYILLSGVPPFWAENEKGIFDEVIKGEIDFVSEPWPSISESAKDLVRKMLTKDPKRRITAAQVLEHPWIKGGEAPDKPIDSAVLSRMKQFRAMNKLKKLALKVIAESLSEEEIKGLKTMFANIDTDKSGTITYEELKTGLTRLGSRLSETEVKQLMEAADVDGNGTIDYYEFISATMHRYKLDRDEHVYKAFQHFDKDNSGHITRDELESAMKEYGMGDEASIKEVISEVDTDNDGRINFEEFCAMMRSGSTQPQGKLLPFH.

A compositionally biased stretch (basic residues) spans 1–10; sequence MGCFSSKHRK. The tract at residues 1–62 is disordered; it reads MGCFSSKHRK…STPSSNPVSV (62 aa). The N-myristoyl glycine moiety is linked to residue Gly-2. Residues 48–60 show a composition bias toward polar residues; it reads IHQQISTPSSNPV. Residues 80 to 338 form the Protein kinase domain; sequence YSLGKELGRG…AAQVLEHPWI (259 aa). ATP is bound by residues 86-94 and Lys-109; that span reads LGRGQFGIT. Asp-204 (proton acceptor) is an active-site residue. At Ser-244 the chain carries Phosphoserine. Positions 343–373 are autoinhibitory domain; the sequence is APDKPIDSAVLSRMKQFRAMNKLKKLALKVI. EF-hand domains follow at residues 380 to 415, 416 to 451, 452 to 487, and 488 to 522; these read EEIKGLKTMFANIDTDKSGTITYEELKTGLTRLGSR, LSETEVKQLMEAADVDGNGTIDYYEFISATMHRYKL, DRDEHVYKAFQHFDKDNSGHITRDELESAMKEYGMG, and DEASIKEVISEVDTDNDGRINFEEFCAMMRSGSTQ. Residues Asp-393, Asp-395, Ser-397, Thr-399, Glu-404, Asp-429, Asp-431, Asn-433, Thr-435, Glu-440, Asp-465, Asp-467, Ser-469, His-471, Glu-476, Asp-500, Asp-502, Asp-504, Arg-506, and Glu-511 each coordinate Ca(2+).

The protein belongs to the protein kinase superfamily. Ser/Thr protein kinase family. CDPK subfamily. Interacts with SLAC1 and ABI1.

It is found in the cell membrane. It carries out the reaction L-seryl-[protein] + ATP = O-phospho-L-seryl-[protein] + ADP + H(+). The enzyme catalyses L-threonyl-[protein] + ATP = O-phospho-L-threonyl-[protein] + ADP + H(+). Its activity is regulated as follows. Activated by calcium. Autophosphorylation may play an important role in the regulation of the kinase activity. In terms of biological role, may play a role in signal transduction pathways that involve calcium as a second messenger. Mediates the phosphorylation and activation of the S-type anion efflux channel SLAC1. This is Calcium-dependent protein kinase 21 (CPK21) from Arabidopsis thaliana (Mouse-ear cress).